Consider the following 1460-residue polypeptide: Ankyrin repeat-containing protein kinase A (1460 aa).

Disordered stretches follow at residues 1-32 (MSIK…NINI), 57-181 (IKQQ…HKSH), 216-259 (RENE…ASST), 272-311 (STSN…VEFD), 329-354 (SSPS…TSTS), 374-510 (FTPS…SSNP), and 551-608 (CPSA…SSIP). Low complexity-rich tracts occupy residues 8-32 (SNIN…NINI), 61-86 (SNNN…PTSH), and 111-128 (SSGS…NNNN). Positions 129-140 (QIKTSNGMNKPN) are enriched in polar residues. Residues 149–162 (KPRENSQNKIDDNK) show a composition bias toward basic and acidic residues. Low complexity-rich tracts occupy residues 220–259 (NNNN…ASST) and 272–300 (STSN…RSTS). 2 stretches are compositionally biased toward polar residues: residues 329 to 345 (SSPS…VHMP) and 384 to 404 (PTNS…TIQP). The span at 405-422 (SSLDSSSESVSDGLQSVS) shows a compositional bias: low complexity. Polar residues predominate over residues 423-434 (GSPVTASPSPTI). Residues 435 to 461 (SNNTNATTTNNNNNTNTNNNNNNNNNQ) show a composition bias toward low complexity. Residues 462-472 (HNHHHHQHSHS) are compositionally biased toward basic residues. The segment at 467-667 (HQHSHSQQHD…IFRGCGIPLD (201 aa)) is interaction with 14-3-3 protein. A compositionally biased stretch (low complexity) spans 486 to 497 (PSSPTSPTLLPS). The segment at 499-551 (THDFSSEYSSNPGGKCAICRKPLWSFPISDKSRRCRDCSLVVHRACVPLATEC) adopts a Phorbol-ester/DAG-type zinc-finger fold. The span at 559–568 (SKLSVPNGNQ) shows a compositional bias: polar residues. A compositionally biased stretch (low complexity) spans 569–608 (SNSSSSSSSSSSSSSSSNSSSSNTKGHSRTPSSPSVSSIP). Residues 653–724 (RDFHFIFRGC…SNIASIEKRS (72 aa)) form the GRAM domain. ANK repeat units lie at residues 814–843 (SKEI…QVNS), 852–883 (KGYT…RVRE), 887–920 (DGNT…NINE), 924–955 (NGET…NVNI), and 959–988 (AGES…DPTI). The Protein kinase domain occupies 1112–1375 (LEYTEKIGSG…ATEAMTALAV (264 aa)). Residues 1118–1126 (IGSGASGKV) and K1139 contribute to the ATP site. D1231 functions as the Proton acceptor in the catalytic mechanism. Residues 1293 to 1313 (MGIVMWEIVYCVVYGCYMIPY) traverse the membrane as a helical segment. Positions 1425–1460 (PEEEQIYQEAMEKQRRNQEASANRNQKNKELLNNNN) form a coiled coil. Residues 1434 to 1460 (AMEKQRRNQEASANRNQKNKELLNNNN) form a disordered region.

It belongs to the protein kinase superfamily. TKL Ser/Thr protein kinase family.

The protein localises to the cytoplasm. It localises to the cytoskeleton. The protein resides in the membrane. It is found in the nucleus. It carries out the reaction L-seryl-[protein] + ATP = O-phospho-L-seryl-[protein] + ADP + H(+). The enzyme catalyses L-threonyl-[protein] + ATP = O-phospho-L-threonyl-[protein] + ADP + H(+). Involved in the development of the fruiting body. Overexpression phenocopies the spnA null phenotype. The polypeptide is Ankyrin repeat-containing protein kinase A (arkA) (Dictyostelium discoideum (Social amoeba)).